We begin with the raw amino-acid sequence, 223 residues long: UPF0173 metal-dependent hydrolase THA_544 (223 aa).

It belongs to the UPF0173 family.

The protein is UPF0173 metal-dependent hydrolase THA_544 of Thermosipho africanus (strain TCF52B).